Consider the following 1082-residue polypeptide: RNA-directed RNA polymerase (1082 aa).

The region spanning L498 to I670 is the RdRp catalytic domain.

Belongs to the reoviridae RNA-directed RNA polymerase family. In terms of assembly, interacts with VP3 (Potential). Interacts with VP2; this interaction activates VP1. Interacts with NSP5; this interaction is probably necessary for the formation of functional virus factories. Interacts with NSP2; this interaction is weak. Mg(2+) is required as a cofactor.

The protein resides in the virion. It carries out the reaction RNA(n) + a ribonucleoside 5'-triphosphate = RNA(n+1) + diphosphate. Its function is as follows. RNA-directed RNA polymerase that is involved in both transcription and genome replication. Together with VP3 capping enzyme, forms an enzyme complex positioned near the channels situated at each of the five-fold vertices of the core. Following infection, the outermost layer of the virus is lost, leaving a double-layered particle (DLP) made up of the core and VP6 shell. VP1 then catalyzes the transcription of fully conservative plus-strand genomic RNAs that are extruded through the DLP's channels into the cytoplasm where they function as mRNAs for translation of viral proteins. One copy of each of the viral (+)RNAs is also recruited during core assembly, together with newly synthesized polymerase complexes and VP2. The polymerase of these novo-formed particles catalyzes the synthesis of complementary minus-strands leading to dsDNA formation. To do so, the polymerase specifically recognizes conserved 3' sequence(s) in plus-strand RNA templates. Once dsRNA synthesis is complete, the polymerase switches to the transcriptional mode, thus providing secondary transcription. The protein is RNA-directed RNA polymerase of Rotavirus C (strain RVC/Pig/United States/Cowden/1980) (RV-C).